Here is a 378-residue protein sequence, read N- to C-terminus: MCSPLPLLILRLLLLTHPSLGRHLRHRESRKIHSVVVSTWNYTDANLQAWSVLKQGPRRTRQAVIQGCLACQNLRCGRLLGGSYGPDERGNLSLEAAIMDGRNQKFGAVAGMEGIRNAILVAEAVLQHTHHSLLVGKGATDFARVMGYKEEHAVNLNTKNVIGNWTFARCQPNFWRDVVPPPRTQCGPYSPLPQYLLQRPMRQEYPITQGEHDQLAFLALDSEGLIHVASYSSGARFRLRGRVGDSAVPGAGIYADNEVGGAIASGDGDVLMHHLPAFLAVEAMRAGQSPAKAAAKVIQRVLKHNTEFNGAVIAVNRWGTYAAACAGMDEFHFVVSGGKGFLRMARVERVKCQDRKDVVDGGPKGFFTRKPMKNRKIE.

The first 21 residues, 1–21 (MCSPLPLLILRLLLLTHPSLG), serve as a signal peptide directing secretion. Intrachain disulfides connect Cys71–Cys76, Cys170–Cys186, and Cys325–Cys352.

Belongs to the Ntn-hydrolase family.

In Drosophila ananassae (Fruit fly), this protein is L-asparaginase-like protein GF11609.